We begin with the raw amino-acid sequence, 657 residues long: Bifunctional lysine-specific demethylase and histidyl-hydroxylase NO66 (657 aa).

Disordered regions lie at residues 1–141 (MQKA…QTSP) and 165–198 (KSCP…NSNE). A compositionally biased stretch (polar residues) spans 32-41 (SAKTVDTVTD). Basic and acidic residues predominate over residues 55 to 71 (AEKERRKYLQARVRAEG). 2 stretches are compositionally biased toward polar residues: residues 73–84 (SASTSSKSNATR) and 132–141 (RSQGLEQTSP). Phosphoserine is present on S133. At T139 the chain carries Phosphothreonine. Residue S140 is modified to Phosphoserine. The region spanning 315 to 454 (NPSTYLLGLR…NLLETLMPIV (140 aa)) is the JmjC domain. Fe cation is bound by residues H355, D357, and H420.

This sequence belongs to the ROX family. NO66 subfamily. It depends on Fe(2+) as a cofactor.

It is found in the nucleus. The catalysed reaction is N(6),N(6)-dimethyl-L-lysyl(36)-[histone H3] + 2 2-oxoglutarate + 2 O2 = L-lysyl(36)-[histone H3] + 2 formaldehyde + 2 succinate + 2 CO2. Its function is as follows. Oxygenase that can act as both a histone lysine demethylase and a ribosomal histidine hydroxylase. Specifically demethylates 'Lys-4' (H3K4me) and 'Lys-36' (H3K36me) of histone H3, thereby playing a central role in histone code. This chain is Bifunctional lysine-specific demethylase and histidyl-hydroxylase NO66, found in Drosophila erecta (Fruit fly).